Consider the following 245-residue polypeptide: Eukaryotic translation initiation factor 6 (245 aa).

Phosphoserine; by CK1 is present on residues S174 and S175. Residue S231 is modified to Phosphoserine.

The protein belongs to the eIF-6 family. As to quaternary structure, monomer. Associates with the 60S ribosomal subunit. Post-translationally, phosphorylation at Ser-174 and Ser-175 promotes nuclear export.

It localises to the cytoplasm. Its subcellular location is the nucleus. The protein localises to the nucleolus. In terms of biological role, binds to the 60S ribosomal subunit and prevents its association with the 40S ribosomal subunit to form the 80S initiation complex in the cytoplasm. Is also involved in ribosome biogenesis. Associates with pre-60S subunits in the nucleus and is involved in its nuclear export. Cytoplasmic release of TIF6 from 60S subunits and nuclear relocalization is promoted by the GTPase RIA1/EFL1 and by SDO1. Also required for pre-rRNA processing. The sequence is that of Eukaryotic translation initiation factor 6 from Saccharomyces cerevisiae (strain ATCC 204508 / S288c) (Baker's yeast).